We begin with the raw amino-acid sequence, 606 residues long: CDPK-related kinase 8 (606 aa).

Residues 1–14 (MGGCTSKPSTSSGR) show a composition bias toward polar residues. The disordered stretch occupies residues 1 to 132 (MGGCTSKPST…TEVPQREEEE (132 aa)). G2 carries the N-myristoyl glycine lipid modification. Residues 98–110 (KHIRAALRRRKGK) are compositionally biased toward basic residues. The Protein kinase domain maps to 150–412 (VELGEEIGRG…ASQALMHPWI (263 aa)). ATP contacts are provided by residues 156–164 (IGRGHFGYT) and K182. D278 acts as the Proton acceptor in catalysis. The residue at position 318 (S318) is a Phosphoserine. The segment at 418–448 (DMNIPFDILIFRQMKAYLRSSSLRKAALRAL) is autoinhibitory domain. A calmodulin binding (CaMBD) region spans residues 437 to 457 (SSSLRKAALRALSKTLIKDEI). 4 EF-hand domains span residues 455 to 491 (DEILYLKTQFSLLAPNKDGLITMDTIRMALASNATEA), 492 to 527 (MKESRIPEFLALLNGLQYRGMDFEEFCAAAINVHQH), 528 to 567 (ESLDCWEQSIRHAYELFDKNGNRAIVIEELASELGVGPSI), and 570 to 599 (HSVLHDWIRHTDGKLSFFGFVKLLHGVSVR). Residues N470, D472, E516, D545, N547, N549, E556, D581, and K583 each coordinate Ca(2+). Phosphoserine is present on S585.

The protein belongs to the protein kinase superfamily. Ser/Thr protein kinase family. CDPK subfamily. Binds calmodulin (CaM) in a calcium-dependent manner. Autophosphorylated.

The protein localises to the membrane. It catalyses the reaction L-seryl-[protein] + ATP = O-phospho-L-seryl-[protein] + ADP + H(+). The enzyme catalyses L-threonyl-[protein] + ATP = O-phospho-L-threonyl-[protein] + ADP + H(+). Its activity is regulated as follows. Activated by calcium and calmodulin. Autophosphorylation may play an important role in the regulation of the kinase activity. May play a role in signal transduction pathways that involve calcium as a second messenger. This Arabidopsis thaliana (Mouse-ear cress) protein is CDPK-related kinase 8 (CRK8).